Here is a 138-residue protein sequence, read N- to C-terminus: Large ribosomal subunit protein bL17 (138 aa).

It belongs to the bacterial ribosomal protein bL17 family. Part of the 50S ribosomal subunit. Contacts protein L32.

In Solidesulfovibrio magneticus (strain ATCC 700980 / DSM 13731 / RS-1) (Desulfovibrio magneticus), this protein is Large ribosomal subunit protein bL17.